The following is a 249-amino-acid chain: DNA polymerase sliding clamp (249 aa).

This sequence belongs to the PCNA family. As to quaternary structure, homotrimer which circularizes head-to-tail (head is a N-terminus, tail is at C-terminus) to form a toroid. RFC opens the toroid so it can load on DNA. Interacts with both Pol I (pol) and Pol II (polB-polC), with Hel308 (hjm) and with Hjc. Interaction with the C-terminal PIP-box of RfcL may stabilize the toroidal structure.

Functionally, sliding clamp subunit that acts as a moving platform for DNA processing. Responsible for tethering the catalytic subunit of DNA polymerase to DNA during high-speed replication. Unlike its eukaryotic paralog, loads on circular DNA without the replication factor C (RFC) clamp loader, although RFC greatly increases loading efficiency. Stimulates the ATPase activity of replication factor C (RFC) in the presence of ssDNA. Stimulates the helicase activity of Hel308 and may alter its substrate specificity. The chain is DNA polymerase sliding clamp from Pyrococcus furiosus (strain ATCC 43587 / DSM 3638 / JCM 8422 / Vc1).